Reading from the N-terminus, the 424-residue chain is Protein FAM43A (424 aa).

Acidic residues predominate over residues 261–297 (QQEEELQEEEEEHLEDCLEEEEEEDGVGDGDPAEEEA). Disordered regions lie at residues 261–299 (QQEEELQEEEEEHLEDCLEEEEEEDGVGDGDPAEEEAEA) and 382–424 (LLSG…PYSG). Positions 382–394 (LLSGESTGSESSI) are enriched in low complexity. A compositionally biased stretch (polar residues) spans 405–418 (SPGNPSGPADSTSL).

The protein belongs to the FAM43 family.

The polypeptide is Protein FAM43A (Fam43a) (Mus musculus (Mouse)).